A 224-amino-acid chain; its full sequence is EF-hand calcium-binding domain-containing protein 1 (224 aa).

An N-terminal signal peptide occupies residues 1–21 (MKVSLLLLALVLVCLVQGSES). The EF-hand domain occupies 115-150 (IAHPDFMKAYSIADVDGDGELSPKEFYNGPYVFEMD). Residues aspartate 128, aspartate 130, aspartate 132, glutamate 134, and glutamate 139 each contribute to the Ca(2+) site.

In terms of tissue distribution, component of the acid-soluble organic matrix of calcified layers of the shell (at protein level).

Its subcellular location is the secreted. In Lottia gigantea (Giant owl limpet), this protein is EF-hand calcium-binding domain-containing protein 1.